A 196-amino-acid polypeptide reads, in one-letter code: Pyridoxal 5'-phosphate synthase subunit PdxT (196 aa).

46–48 contributes to the L-glutamine binding site; that stretch reads GES. Residue C78 is the Nucleophile of the active site. Residues R105 and 134-135 contribute to the L-glutamine site; that span reads IR. Residues H170 and E172 each act as charge relay system in the active site.

The protein belongs to the glutaminase PdxT/SNO family. In the presence of PdxS, forms a dodecamer of heterodimers. Only shows activity in the heterodimer.

The enzyme catalyses aldehydo-D-ribose 5-phosphate + D-glyceraldehyde 3-phosphate + L-glutamine = pyridoxal 5'-phosphate + L-glutamate + phosphate + 3 H2O + H(+). The catalysed reaction is L-glutamine + H2O = L-glutamate + NH4(+). It functions in the pathway cofactor biosynthesis; pyridoxal 5'-phosphate biosynthesis. Its function is as follows. Catalyzes the hydrolysis of glutamine to glutamate and ammonia as part of the biosynthesis of pyridoxal 5'-phosphate. The resulting ammonia molecule is channeled to the active site of PdxS. This chain is Pyridoxal 5'-phosphate synthase subunit PdxT, found in Pelotomaculum thermopropionicum (strain DSM 13744 / JCM 10971 / SI).